Reading from the N-terminus, the 82-residue chain is Small ribosomal subunit protein bS18A (82 aa).

The protein belongs to the bacterial ribosomal protein bS18 family. As to quaternary structure, part of the 30S ribosomal subunit. Forms a tight heterodimer with protein bS6.

Functionally, binds as a heterodimer with protein bS6 to the central domain of the 16S rRNA, where it helps stabilize the platform of the 30S subunit. This chain is Small ribosomal subunit protein bS18A, found in Streptomyces griseus subsp. griseus (strain JCM 4626 / CBS 651.72 / NBRC 13350 / KCC S-0626 / ISP 5235).